A 117-amino-acid chain; its full sequence is Hydrogenase maturation factor HypA (117 aa).

Position 2 (H2) interacts with Ni(2+). The Zn(2+) site is built by C73, C76, C89, and C92.

The protein belongs to the HypA/HybF family.

Involved in the maturation of [NiFe] hydrogenases. Required for nickel insertion into the metal center of the hydrogenase. This is Hydrogenase maturation factor HypA from Shewanella baltica (strain OS195).